The following is a 337-amino-acid chain: 5-formaminoimidazole-4-carboxamide-1-(beta)-D-ribofuranosyl 5'-monophosphate synthetase (337 aa).

The 5-amino-1-(5-phospho-beta-D-ribosyl)imidazole-4-carboxamide site is built by histidine 14 and serine 74. Positions 81-328 constitute an ATP-grasp domain; it reads VELVERMKVP…IAREIRLAIE (248 aa). ATP is bound by residues 125 to 185 and glutamate 207; that span reads PDDI…VPVY. Asparagine 235 is a binding site for 5-amino-1-(5-phospho-beta-D-ribosyl)imidazole-4-carboxamide. Glutamate 273 and glutamate 286 together coordinate Mg(2+).

The protein belongs to the phosphohexose mutase family. The cofactor is Mg(2+). Requires Mn(2+) as cofactor.

It carries out the reaction 5-amino-1-(5-phospho-beta-D-ribosyl)imidazole-4-carboxamide + formate + ATP = 5-formamido-1-(5-phospho-D-ribosyl)imidazole-4-carboxamide + ADP + phosphate. It functions in the pathway purine metabolism; IMP biosynthesis via de novo pathway; 5-formamido-1-(5-phospho-D-ribosyl)imidazole-4-carboxamide from 5-amino-1-(5-phospho-D-ribosyl)imidazole-4-carboxamide (formate route): step 1/1. Catalyzes the ATP- and formate-dependent formylation of 5-aminoimidazole-4-carboxamide-1-beta-d-ribofuranosyl 5'-monophosphate (AICAR) to 5-formaminoimidazole-4-carboxamide-1-beta-d-ribofuranosyl 5'-monophosphate (FAICAR) in the absence of folates. The protein is 5-formaminoimidazole-4-carboxamide-1-(beta)-D-ribofuranosyl 5'-monophosphate synthetase of Pyrococcus abyssi (strain GE5 / Orsay).